Reading from the N-terminus, the 349-residue chain is NADH-quinone oxidoreductase subunit H (349 aa).

Helical transmembrane passes span 14–34, 85–105, 120–140, 164–184, 196–216, 243–263, 285–305, and 324–344; these read LLVWTLLKIIAIVLPMLGCVA, GLFLLAPVLSIGPALAAWAVI, LLYILALTSMGVYGVIIAGWA, MGFALVGVLMVSGSLNLVDIV, ILSWNWIPLFPLFIVYLISGV, GMAFAIFFLAEYANMILVAAL, AGGFFWLAVKMALVLFCFLWF, and VFIPVTLVWILVVGAWMFSPL.

This sequence belongs to the complex I subunit 1 family. As to quaternary structure, NDH-1 is composed of 14 different subunits. Subunits NuoA, H, J, K, L, M, N constitute the membrane sector of the complex.

It is found in the cell inner membrane. The catalysed reaction is a quinone + NADH + 5 H(+)(in) = a quinol + NAD(+) + 4 H(+)(out). In terms of biological role, NDH-1 shuttles electrons from NADH, via FMN and iron-sulfur (Fe-S) centers, to quinones in the respiratory chain. The immediate electron acceptor for the enzyme in this species is believed to be ubiquinone. Couples the redox reaction to proton translocation (for every two electrons transferred, four hydrogen ions are translocated across the cytoplasmic membrane), and thus conserves the redox energy in a proton gradient. This subunit may bind ubiquinone. This chain is NADH-quinone oxidoreductase subunit H, found in Chromobacterium violaceum (strain ATCC 12472 / DSM 30191 / JCM 1249 / CCUG 213 / NBRC 12614 / NCIMB 9131 / NCTC 9757 / MK).